The chain runs to 281 residues: Transcription factor bHLH79 (281 aa).

The disordered stretch occupies residues 47–167; it reads FTRSEHSGNK…GQATDRHSLA (121 aa). 2 stretches are compositionally biased toward basic and acidic residues: residues 77–88 and 138–152; these read KTRDLNSEDDSS and TEQKNKPEPPKDYIH. The region spanning 159–209 is the bHLH domain; sequence QATDRHSLAERARREKISEKMTALQDIIPGCNKIIGKALVLDEIINYIQSL.

As to quaternary structure, homodimer.

It localises to the nucleus. This Arabidopsis thaliana (Mouse-ear cress) protein is Transcription factor bHLH79 (BHLH79).